Here is a 440-residue protein sequence, read N- to C-terminus: Oligodendrocyte-myelin glycoprotein (440 aa).

The N-terminal stretch at 1–24 (MEYQILKMSLCLFILLFLTPGILC) is a signal peptide. The LRRNT domain occupies 25–55 (ICPLQCICTERHRHVDCSGRNLSTLPSGLQE). Residues Asn-45 and Asn-61 are each glycosylated (N-linked (GlcNAc...) asparagine). LRR repeat units follow at residues 56–77 (NIIH…LTQY), 79–100 (NLRT…LPRS), 101–121 (LWNM…DTAY), 124–145 (NLKY…KNTL), 147–168 (SLEV…MPSK), 169–189 (LHIV…TLIN), 192–213 (NLTH…SFDQ), and 216–239 (QLQE…TYLL). A glycan (N-linked (GlcNAc...) asparagine) is linked at Asn-103. 5 N-linked (GlcNAc...) asparagine glycosylation sites follow: Asn-152, Asn-176, Asn-189, Asn-192, and Asn-234. 5 Ser/Thr-rich repeats span residues 229 to 270 (CDHK…YPTP), 271 to 292 (SGFT…INSL), 293 to 335 (SVVT…VPYP), 336 to 377 (EDTS…SPTP), and 378 to 416 (MTLS…TPLP). 2 N-linked (GlcNAc...) asparagine glycosylation sites follow: Asn-364 and Asn-389. A lipid anchor (GPI-anchor amidated serine) is attached at Ser-417. Positions 418-440 (VANAWKVNASFLLLLNVVVMLAV) are cleaved as a propeptide — removed in mature form. Asn-425 carries N-linked (GlcNAc...) asparagine glycosylation.

Binds to RTN4R. Post-translationally, O-glycosylated in its Ser/Thr-rich repeat domain. As to expression, oligodendrocytes and myelin of the central nervous system.

The protein localises to the cell membrane. Functionally, cell adhesion molecule contributing to the interactive process required for myelination in the central nervous system. This is Oligodendrocyte-myelin glycoprotein (OMG) from Homo sapiens (Human).